A 24-amino-acid polypeptide reads, in one-letter code: Brevinin-1SPa (24 aa).

A disulfide bridge connects residues Cys18 and Cys24.

Expressed by the skin glands.

The protein localises to the secreted. In terms of biological role, antimicrobial peptide with activity against Gram-negative and Gram-positive bacteria (MIC=13 uM against E.coli, MIC=3 uM against S.aureus) and fungi (MIC=6 uM against C.albicans). Shows hemolytic activity on human erythrocytes (HC(50)=7 uM). The polypeptide is Brevinin-1SPa (Lithobates septentrionalis (Mink frog)).